Here is a 672-residue protein sequence, read N- to C-terminus: MLHGGDYNPDQWLDRPDILADDIKLMKLSHTNTFSVGIFAWSALEPEEGVYQFEWLDDIFERIHSIGGRVILATPSGARPAWLSQTYPEVLRVNASRVKQLHGGRHNHCLTSKVYREKTRHINRLLAERYGHHPALLMWHISNEYGGDCHCDLCQHAFREWLKSKYDNSLKTLNHAWWTPFWSHTFNDWSQIESPSPIGENGLHGLNLDWRRFVTDQTISFYENEIIPLKELTPDIPITTNFMADTPDLIPYQGLDYSKFAKHVDAISWDAYPVWHNDWESTADLAMKVGFINDLYRSLKQQPFLLMECTPSAVNWHNVNKAKRPGMNLLSSMQMIAHGSDSVLYFQYRKSRGSSEKLHGAVVDHDNSPKNRVFQEVAKVGETLERLSEVVGTKRPAQTAILYDWENHWALEDAQGFAKATKRYPQTLQQHYRTFWEHDIPVDVITKEQDFSPYKLLIVPMLYLISEDTVSRLKAFTADGGTLVMTYISGVVNEHDLTYTGGWHPDLQAIFGVEPLETDTLYPKDRNAVSYRSQIYEMKDYATVIDVKTASVEAVYQEDFYARTPAVTSHEYQQGKAYFIGARLEDQFQRDFYEGLITDLSLSPVFPVRHGKGVSVQARQDQDNDYIFVMNFTEEKQLVTFDQSVKDIMTGDILSGDLTMEKYEVRIVVNTH.

Substrate is bound at residue R105. Residue C109 coordinates Zn(2+). Position 143 (N143) interacts with substrate. Residue E144 is the Proton donor of the active site. Zn(2+) contacts are provided by C149, C151, and C154. The active-site Nucleophile is E308. Residues W316 and 356-359 contribute to the substrate site; that span reads EKLH.

The protein belongs to the glycosyl hydrolase 42 family. Homotrimer.

The enzyme catalyses Hydrolysis of terminal non-reducing beta-D-galactose residues in beta-D-galactosides.. Its activity is regulated as follows. Inhibited by zinc, cobalt and copper ions. Involved in galactan degradation. Hydrolyzes galactooligosaccharides released by the endo-beta-1,4-galactanase GanB from galactan. Degrades galactotetraose, galactotriose and galactobiose, generating galactose as the end product. It is unable to use lactose. In vitro, shows maximal activity with o-nitrophenyl-beta-D-galactopyranoside (ONPG) and p-nitrophenyl-beta-D-galactopyranoside (PNPG) as substrates, trace activity with p-nitrophenyl-alpha-L-arabinopyranoside and o-nitrophenyl-beta-D-fucopyranoside as substrates, but no activity with p-nitrophenyl-alpha-D-galactopyranoside, p-nitrophenyl-beta-D-glucopyranoside, o-nitrophenyl-beta-D-xylopyranoside, p-nitrophenyl-beta-D-mannopyranoside or p-nitrophenyl-alpha-L-arabinofuranoside as substrates. The protein is Beta-galactosidase GanA of Bacillus subtilis (strain 168).